The primary structure comprises 538 residues: Sensor protein CitS (538 aa).

Over M1 to K13 the chain is Cytoplasmic. A helical membrane pass occupies residues M14 to N34. The Extracellular portion of the chain corresponds to E35–L174. A helical membrane pass occupies residues I175–V195. Residues A196–G538 are Cytoplasmic-facing. In terms of domain architecture, PAS spans Q216 to Q282. The Histidine kinase domain maps to A339–E534. H342 is modified (phosphohistidine; by autocatalysis).

The protein resides in the cell membrane. The catalysed reaction is ATP + protein L-histidine = ADP + protein N-phospho-L-histidine.. Its function is as follows. Member of the two-component regulatory system CitT/CitS. Functions probably as a membrane-associated protein kinase that phosphorylates CitT in response to environmental citrate or Mg(2+)-citrate complex. The protein is Sensor protein CitS (citS) of Halalkalibacterium halodurans (strain ATCC BAA-125 / DSM 18197 / FERM 7344 / JCM 9153 / C-125) (Bacillus halodurans).